A 694-amino-acid polypeptide reads, in one-letter code: Elongation factor G (694 aa).

Residues 11–285 form the tr-type G domain; that stretch reads KDYRNIGIMA…AVIDYLPSPL (275 aa). Residues 20-27, 84-88, and 138-141 each bind GTP; these read AHIDAGKT, DTPGH, and NKMD.

Belongs to the TRAFAC class translation factor GTPase superfamily. Classic translation factor GTPase family. EF-G/EF-2 subfamily.

The protein localises to the cytoplasm. In terms of biological role, catalyzes the GTP-dependent ribosomal translocation step during translation elongation. During this step, the ribosome changes from the pre-translocational (PRE) to the post-translocational (POST) state as the newly formed A-site-bound peptidyl-tRNA and P-site-bound deacylated tRNA move to the P and E sites, respectively. Catalyzes the coordinated movement of the two tRNA molecules, the mRNA and conformational changes in the ribosome. This Mycoplasma mobile (strain ATCC 43663 / 163K / NCTC 11711) (Mesomycoplasma mobile) protein is Elongation factor G.